The primary structure comprises 393 residues: Protein TBATA (393 aa).

Disordered regions lie at residues methionine 1–glutamine 39, valine 168–arginine 188, threonine 202–valine 264, and glutamate 340–serine 393. Over residues proline 20–glycine 34 the composition is skewed to basic and acidic residues. The span at proline 173–aspartate 185 shows a compositional bias: polar residues. 2 stretches are compositionally biased toward basic and acidic residues: residues isoleucine 205 to glycine 227 and proline 380 to serine 393.

This sequence belongs to the TBATA family. In terms of assembly, interacts with KIF17. Interacts with UBA3. As to expression, expressed in the subcapsular region of the thymus and lymph node (at protein level). Highly expressed in thymic cortical stromal cells and testis. Lower levels found in brain cortex, hippocampus, kidney, cerebellum, skeletal muscle, epididymis and ovary. No expression detected in other lymphoid organs including bone marrow and spleen. Isoform 1 and isoform 2 are expressed predominantly in testis. Isoform 3, isoform 4 and isoform 5 are expressed predominantly in thymus although isoform 3 is also expressed in testis. In the CNS, highly expressed in restricted areas, the cerebellum and hippocampus.

The protein resides in the cytoplasm. Its subcellular location is the cytosol. It localises to the nucleus. Isoform 1 and isoform 2 may play a role in spermatid differentiation. Isoform 1 and isoform 2 regulate thymus function by modulating stromal cell proliferation via interference with the NEDD8 pathway. In Mus musculus (Mouse), this protein is Protein TBATA (Tbata).